The following is an 84-amino-acid chain: Small ribosomal subunit protein bS16c (84 aa).

It belongs to the bacterial ribosomal protein bS16 family.

It is found in the plastid. The protein resides in the chloroplast. The chain is Small ribosomal subunit protein bS16c from Anthoceros angustus (Hornwort).